We begin with the raw amino-acid sequence, 463 residues long: L-seryl-tRNA(Sec) selenium transferase (463 aa).

An N6-(pyridoxal phosphate)lysine modification is found at lysine 295.

The protein belongs to the SelA family. In terms of assembly, homodecamer; pentamer of dimers. Binds only one seryl-tRNA(Sec) per dimer. The cofactor is pyridoxal 5'-phosphate.

It localises to the cytoplasm. It carries out the reaction L-seryl-tRNA(Sec) + selenophosphate + H(+) = L-selenocysteinyl-tRNA(Sec) + phosphate. It participates in aminoacyl-tRNA biosynthesis; selenocysteinyl-tRNA(Sec) biosynthesis; selenocysteinyl-tRNA(Sec) from L-seryl-tRNA(Sec) (bacterial route): step 1/1. Functionally, converts seryl-tRNA(Sec) to selenocysteinyl-tRNA(Sec) required for selenoprotein biosynthesis. The chain is L-seryl-tRNA(Sec) selenium transferase from Edwardsiella ictaluri (strain 93-146).